Here is a 468-residue protein sequence, read N- to C-terminus: Peroxisome proliferator-activated receptor alpha (468 aa).

The interval M1–E20 is disordered. Positions N99–F173 form a DNA-binding region, nuclear receptor. NR C4-type zinc fingers lie at residues C102–C122 and C139–C161. Residues F239 to D466 form the NR LBD domain. The segment at D304–L433 is required for heterodimerization with RXRA.

This sequence belongs to the nuclear hormone receptor family. NR1 subfamily. Heterodimer; with RXRA. This heterodimerization is required for DNA binding and transactivation activity. Interacts with NCOA3 coactivator. Interacts with CITED2; the interaction stimulates its transcriptional activity. Also interacts with PPARBP in vitro. Interacts with AKAP13, LPIN1, PRDM16 and coactivator NCOA6. Interacts with ASXL1 and ASXL2. Interacts with PER2. Interacts with SIRT1; the interaction seems to be modulated by NAD(+) levels. Interacts with CRY1 and CRY2. In hepatocytes, interacts with PAQR3 and HUWE1; the interactions promote PPARA poylubiquitination and HUWE1-mediated degradation. Post-translationally, ubiquitinated by E3 ubiquitin-protein ligase HUWE1; leading to proteasomal degradation. Phosphorylated.

It is found in the nucleus. Its function is as follows. Ligand-activated transcription factor. Key regulator of lipid metabolism. Activated by the endogenous ligand 1-palmitoyl-2-oleoyl-sn-glycerol-3-phosphocholine (16:0/18:1-GPC). Activated by oleylethanolamide, a naturally occurring lipid that regulates satiety. Receptor for peroxisome proliferators such as hypolipidemic drugs and fatty acids. Regulates the peroxisomal beta-oxidation pathway of fatty acids. Functions as a transcription activator for the ACOX1 and P450 genes. Transactivation activity requires heterodimerization with RXRA and is antagonized by NR2C2. May be required for the propagation of clock information to metabolic pathways regulated by PER2. This Phascolarctos cinereus (Koala) protein is Peroxisome proliferator-activated receptor alpha (PPARA).